The primary structure comprises 70 residues: Small ribosomal subunit protein bS21 (70 aa).

It belongs to the bacterial ribosomal protein bS21 family.

In Campylobacter hominis (strain ATCC BAA-381 / DSM 21671 / CCUG 45161 / LMG 19568 / NCTC 13146 / CH001A), this protein is Small ribosomal subunit protein bS21.